The primary structure comprises 87 residues: UPF0367 protein SynWH7803_2240 (87 aa).

This sequence belongs to the UPF0367 family.

This Synechococcus sp. (strain WH7803) protein is UPF0367 protein SynWH7803_2240.